Here is a 247-residue protein sequence, read N- to C-terminus: Reticulon-like protein B8 (247 aa).

Residues 61–247 (SADVLLWRNK…SGKFGLKKRE (187 aa)) enclose the Reticulon domain. A run of 3 helical transmembrane segments spans residues 71–91 (KISA…EWIN), 92–112 (FHFL…QFVW), and 166–186 (FLMA…CNFL).

It is found in the endoplasmic reticulum membrane. In Arabidopsis thaliana (Mouse-ear cress), this protein is Reticulon-like protein B8 (RTNLB8).